A 286-amino-acid chain; its full sequence is Pyridoxal kinase PdxY (286 aa).

Residues serine 9 and 44–45 (TQ) contribute to the substrate site. Residues aspartate 111, alanine 143, glutamate 148, lysine 181, and 208–211 (RPLV) contribute to the ATP site. Residue aspartate 223 participates in substrate binding.

This sequence belongs to the pyridoxine kinase family. PdxY subfamily. Homodimer. It depends on Mg(2+) as a cofactor.

The catalysed reaction is pyridoxal + ATP = pyridoxal 5'-phosphate + ADP + H(+). It functions in the pathway cofactor metabolism; pyridoxal 5'-phosphate salvage; pyridoxal 5'-phosphate from pyridoxal: step 1/1. Pyridoxal kinase involved in the salvage pathway of pyridoxal 5'-phosphate (PLP). Catalyzes the phosphorylation of pyridoxal to PLP. The polypeptide is Pyridoxal kinase PdxY (Salmonella choleraesuis (strain SC-B67)).